We begin with the raw amino-acid sequence, 431 residues long: Ornithine decarboxylase (431 aa).

Residue Lys94 is modified to N6-(pyridoxal phosphate)lysine. Pyridoxal 5'-phosphate is bound by residues Ser226, Gly264, and 297 to 300; that span reads EPGR. Residue 340-341 participates in substrate binding; the sequence is YD. The Proton donor; shared with dimeric partner role is filled by Cys376. Asp377 provides a ligand contact to substrate. Residue Tyr405 participates in pyridoxal 5'-phosphate binding.

The protein belongs to the Orn/Lys/Arg decarboxylase class-II family. Homodimer. Only the dimer is catalytically active, as the active sites are constructed of residues from both monomers. The cofactor is pyridoxal 5'-phosphate.

The enzyme catalyses L-ornithine + H(+) = putrescine + CO2. It functions in the pathway amine and polyamine biosynthesis; putrescine biosynthesis via L-ornithine pathway; putrescine from L-ornithine: step 1/1. With respect to regulation, inhibited by antizyme (AZ) in response to polyamine levels. AZ inhibits the assembly of the functional homodimer by binding to ODC monomers and targeting them for ubiquitin-independent proteolytic destruction by the 26S proteasome. Its function is as follows. Catalyzes the first and rate-limiting step of polyamine biosynthesis that converts ornithine into putrescine, which is the precursor for the polyamines, spermidine and spermine. Polyamines are essential for cell proliferation and are implicated in cellular processes, ranging from DNA replication to apoptosis. In Datura stramonium (Jimsonweed), this protein is Ornithine decarboxylase.